Here is a 271-residue protein sequence, read N- to C-terminus: Oxamate carbamoyltransferase subunit AllH (271 aa).

Belongs to the AllH family. As to quaternary structure, the OXTCase is composed of 3 subunits, AllF, AllG and AllH. Mg(2+) serves as cofactor.

The catalysed reaction is oxamate + carbamoyl phosphate = N-carbamoyl-2-oxoglycine + phosphate. It participates in nitrogen metabolism; (S)-allantoin degradation. Component of a carbamoyltransferase involved in the anaerobic nitrogen utilization via the assimilation of allantoin. Catalyzes the conversion of oxalurate (N-carbamoyl-2-oxoglycine) to oxamate and carbamoyl phosphate. The protein is Oxamate carbamoyltransferase subunit AllH of Escherichia coli O157:H7.